Reading from the N-terminus, the 125-residue chain is DNA-directed RNA polymerase subunit omega (125 aa).

Belongs to the RNA polymerase subunit omega family. As to quaternary structure, the RNAP catalytic core consists of 2 alpha, 1 beta, 1 beta' and 1 omega subunit. When a sigma factor is associated with the core the holoenzyme is formed, which can initiate transcription.

The catalysed reaction is RNA(n) + a ribonucleoside 5'-triphosphate = RNA(n+1) + diphosphate. Promotes RNA polymerase assembly. Latches the N- and C-terminal regions of the beta' subunit thereby facilitating its interaction with the beta and alpha subunits. The polypeptide is DNA-directed RNA polymerase subunit omega (Zymomonas mobilis subsp. mobilis (strain ATCC 31821 / ZM4 / CP4)).